Here is a 480-residue protein sequence, read N- to C-terminus: Ammonium transporter 2 member 4 (480 aa).

Residues 1 to 27 are Extracellular-facing; it reads MELPSNLLPDEASPEWMNKGDNAWQLT. Residues 28–48 traverse the membrane as a helical segment; that stretch reads AATMVGLQSIPGLVILYGSLV. At 49–51 the chain is on the cytoplasmic side; that stretch reads KKT. A helical transmembrane segment spans residues 52–72; it reads WAINSAFMAFYAFASVLLCWV. Over 73–113 the chain is Extracellular; that stretch reads SWAYQMSFGEKMVFFLGKPNVALDEKFLLGKAFLGNFPNAT. The N-linked (GlcNAc...) asparagine glycan is linked to Asn-111. The helical transmembrane segment at 114–134 threads the bilayer; sequence MVFYQGVFAGLTLILIAGALL. The Cytoplasmic portion of the chain corresponds to 135–141; the sequence is GRMNIRA. A helical transmembrane segment spans residues 142-162; the sequence is WMLFVPLWVTFSYTVVAFSIW. At 163–175 the chain is on the extracellular side; the sequence is CPDGWLAKRGVID. Residues 176-196 traverse the membrane as a helical segment; it reads FAGGYVIHLSAGVAGFTAAYW. At 197–214 the chain is on the cytoplasmic side; the sequence is VGPRADKDRETFPAATNN. Residues 215–235 form a helical membrane-spanning segment; the sequence is MIMVLAGAGLLWMGWSGFNGG. The Extracellular segment spans residues 236 to 242; sequence APFVAST. The helical transmembrane segment at 243 to 263 threads the bilayer; sequence IASLAILNTHVCTAASITVWV. The Cytoplasmic segment spans residues 264–274; it reads MLDTFYFGKPT. The helical transmembrane segment at 275–295 threads the bilayer; sequence VFGAVQGMITGLVCITPAAGV. Topologically, residues 296–298 are extracellular; the sequence is VQG. A helical membrane pass occupies residues 299–319; sequence WAAILMGFISGSIPWYTMMVL. Residues 320-334 lie on the Cytoplasmic side of the membrane; that stretch reads HNKVNFLKKIDDPMA. Residues 335–355 traverse the membrane as a helical segment; the sequence is VFHTHAIAGALGGILTGFFAV. The Extracellular segment spans residues 356–394; the sequence is PKLCRLFYMVPDWEKYIGLAYGLQNKGATQAGLKQMVIQ. The chain crosses the membrane as a helical span at residues 395–415; the sequence is IEAIVFVICYNVLMTSLICLI. The Cytoplasmic portion of the chain corresponds to 416–480; the sequence is VRVIVPLRLN…SRSLGELQMV (65 aa).

It belongs to the ammonia transporter channel (TC 1.A.11.2) family.

Its subcellular location is the cell membrane. Functionally, involved in ammonium transport. May be involved in arbuscular mycorrhizal (AM) symbiosis with AM fungi. This is Ammonium transporter 2 member 4 from Medicago truncatula (Barrel medic).